Consider the following 461-residue polypeptide: Propionyl-CoA carboxylase regulator (461 aa).

The region spanning L11–L65 is the HTH cro/C1-type domain. Residues Q22–N41 constitute a DNA-binding region (H-T-H motif).

The protein belongs to the short-chain fatty acyl-CoA assimilation regulator (ScfR) family.

In terms of biological role, transcriptional regulator that controls propionyl-CoA assimilation through the methylmalonyl-CoA pathway via regulation of pccB expression. This chain is Propionyl-CoA carboxylase regulator, found in Cereibacter sphaeroides (strain ATCC 17023 / DSM 158 / JCM 6121 / CCUG 31486 / LMG 2827 / NBRC 12203 / NCIMB 8253 / ATH 2.4.1.) (Rhodobacter sphaeroides).